Consider the following 293-residue polypeptide: Bifunctional protein FolD (293 aa).

Residues 166–168 (GAS) and isoleucine 232 contribute to the NADP(+) site.

It belongs to the tetrahydrofolate dehydrogenase/cyclohydrolase family. As to quaternary structure, homodimer.

The enzyme catalyses (6R)-5,10-methylene-5,6,7,8-tetrahydrofolate + NADP(+) = (6R)-5,10-methenyltetrahydrofolate + NADPH. It catalyses the reaction (6R)-5,10-methenyltetrahydrofolate + H2O = (6R)-10-formyltetrahydrofolate + H(+). It participates in one-carbon metabolism; tetrahydrofolate interconversion. Functionally, catalyzes the oxidation of 5,10-methylenetetrahydrofolate to 5,10-methenyltetrahydrofolate and then the hydrolysis of 5,10-methenyltetrahydrofolate to 10-formyltetrahydrofolate. This is Bifunctional protein FolD from Yersinia enterocolitica serotype O:8 / biotype 1B (strain NCTC 13174 / 8081).